Reading from the N-terminus, the 76-residue chain is Kappa-actitoxin-Avd4c (76 aa).

Positions 1 to 19 are cleaved as a signal peptide; it reads MNKALFLCLVVLCAAVVFA. The propeptide occupies 20-31; it reads AEDLQKAKHAPF. Intrachain disulfides connect C37–C72, C39–C65, and C55–C73.

It belongs to the sea anemone type 3 (BDS) potassium channel toxin family. As to expression, moderately expressed in the ectodermal tissue from the distal and proximal tentacles, body wall, and oral disk.

The protein resides in the secreted. It is found in the nematocyst. In terms of biological role, blocks Kv3 voltage-gated potassium channels. Reduces blood pressure. This is Kappa-actitoxin-Avd4c from Anemonia viridis (Snakelocks anemone).